Consider the following 197-residue polypeptide: Carbohydrate-binding X8 domain-containing protein (197 aa).

Positions 1–19 (MAVLLPLFLLSFMFTYSNA) are cleaved as a signal peptide. Over residues 101–113 (SCLSSSSSNGTPT) the composition is skewed to low complexity. The disordered stretch occupies residues 101–176 (SCLSSSSSNG…TSGDPNGGEE (76 aa)). Polar residues predominate over residues 116–125 (YPSTGNSTTA). Positions 126 to 145 (SPGTTNPSTGNSTNSTLPTN) are enriched in low complexity. Positions 146–155 (DKPTSSTITF) are enriched in polar residues. The span at 156–170 (PDSTTMGPSSSTSGD) shows a compositional bias: low complexity. The GPI-anchor amidated asparagine moiety is linked to residue Asn172. Residues 173–197 (GGEELSVRTTTIILLTTIAAVALRV) constitute a propeptide, removed in mature form.

As to expression, expressed in the sieve elements.

Its subcellular location is the cell membrane. This is Carbohydrate-binding X8 domain-containing protein from Arabidopsis thaliana (Mouse-ear cress).